The sequence spans 63 residues: Putative antitoxin AF_1084 (63 aa).

Belongs to the UPF0165 family.

Possibly the antitoxin component of a type II toxin-antitoxin (TA) system. The protein is Putative antitoxin AF_1084 of Archaeoglobus fulgidus (strain ATCC 49558 / DSM 4304 / JCM 9628 / NBRC 100126 / VC-16).